We begin with the raw amino-acid sequence, 90 residues long: MKTAIFTVVLALAVFAVLSFGWEANEKALSEEFTELIHEKEAASETEARECRYFWGECHDHMPCCDWLVCRYKWPITYNIRVWNRTFPEK.

The signal sequence occupies residues methionine 1–serine 19. Residues phenylalanine 20 to glutamate 50 constitute a propeptide that is removed on maturation. 2 cysteine pairs are disulfide-bonded: cysteine 51/cysteine 65 and cysteine 58/cysteine 70.

Belongs to the neurotoxin 10 (Hwtx-1) family. 13 (Hntx-13) subfamily. As to expression, expressed by the venom gland.

Its subcellular location is the secreted. Functionally, ion channel inhibitor. This Cyriopagopus hainanus (Chinese bird spider) protein is U7-theraphotoxin-Hhn1k.